Reading from the N-terminus, the 237-residue chain is B3 domain-containing protein At1g20600 (237 aa).

Positions 53-79 (LVSQANQKQSRKREEKTEKNQPKRVKN) are disordered. Residues 64–73 (KREEKTEKNQ) are compositionally biased toward basic and acidic residues. Positions 126-230 (KKQLMSSDVD…LEHVFIRGSK (105 aa)) form a DNA-binding region, TF-B3.

Its subcellular location is the nucleus. The protein is B3 domain-containing protein At1g20600 of Arabidopsis thaliana (Mouse-ear cress).